The primary structure comprises 325 residues: DNA-directed RNA polymerase subunit alpha (325 aa).

The segment at 1–238 (MSPKNLLKGF…DHLTVFINFE (238 aa)) is alpha N-terminal domain (alpha-NTD). Residues 255 to 325 (LKAALSKHVE…MGLSFGMRDF (71 aa)) are alpha C-terminal domain (alpha-CTD).

It belongs to the RNA polymerase alpha chain family. In terms of assembly, homodimer. The RNAP catalytic core consists of 2 alpha, 1 beta, 1 beta' and 1 omega subunit. When a sigma factor is associated with the core the holoenzyme is formed, which can initiate transcription.

It carries out the reaction RNA(n) + a ribonucleoside 5'-triphosphate = RNA(n+1) + diphosphate. Its function is as follows. DNA-dependent RNA polymerase catalyzes the transcription of DNA into RNA using the four ribonucleoside triphosphates as substrates. This chain is DNA-directed RNA polymerase subunit alpha, found in Leptospira biflexa serovar Patoc (strain Patoc 1 / Ames).